The sequence spans 345 residues: 4-hydroxy-3-methylbut-2-en-1-yl diphosphate synthase (flavodoxin) (345 aa).

Cys271, Cys274, Cys306, and Glu313 together coordinate [4Fe-4S] cluster.

The protein belongs to the IspG family. [4Fe-4S] cluster serves as cofactor.

It catalyses the reaction (2E)-4-hydroxy-3-methylbut-2-enyl diphosphate + oxidized [flavodoxin] + H2O + 2 H(+) = 2-C-methyl-D-erythritol 2,4-cyclic diphosphate + reduced [flavodoxin]. The protein operates within isoprenoid biosynthesis; isopentenyl diphosphate biosynthesis via DXP pathway; isopentenyl diphosphate from 1-deoxy-D-xylulose 5-phosphate: step 5/6. In terms of biological role, converts 2C-methyl-D-erythritol 2,4-cyclodiphosphate (ME-2,4cPP) into 1-hydroxy-2-methyl-2-(E)-butenyl 4-diphosphate. The protein is 4-hydroxy-3-methylbut-2-en-1-yl diphosphate synthase (flavodoxin) of Haemophilus influenzae (strain PittEE).